Reading from the N-terminus, the 707-residue chain is Polyribonucleotide nucleotidyltransferase (707 aa).

The Mg(2+) site is built by D486 and D492. The 60-residue stretch at 553 to 612 (PRIHTIKINPEKIKDVIGKGGSVIRALTEETGTTIEIEDDGTVKIAATDGDKAKHAIRRI) folds into the KH domain. Residues 622-690 (GRIYQGKVTR…RQGRVRLSIK (69 aa)) enclose the S1 motif domain.

This sequence belongs to the polyribonucleotide nucleotidyltransferase family. Component of the RNA degradosome, which is a multiprotein complex involved in RNA processing and mRNA degradation. The cofactor is Mg(2+).

The protein resides in the cytoplasm. The enzyme catalyses RNA(n+1) + phosphate = RNA(n) + a ribonucleoside 5'-diphosphate. Functionally, involved in mRNA degradation. Catalyzes the phosphorolysis of single-stranded polyribonucleotides processively in the 3'- to 5'-direction. In Edwardsiella ictaluri (strain 93-146), this protein is Polyribonucleotide nucleotidyltransferase.